Reading from the N-terminus, the 970-residue chain is Protein bicaudal C homolog 1-B (970 aa).

The tract at residues 1–50 is disordered; the sequence is MAAQCGGYMNQSDPGSNSERSADSPLPGSEDDSPGSAAPHDPEWREERFR. The segment covering 9 to 19 has biased composition (polar residues); sequence MNQSDPGSNSE. Residues 40 to 50 are compositionally biased toward basic and acidic residues; it reads HDPEWREERFR. 2 consecutive KH domains span residues 130 to 197 and 282 to 346; these read RVTL…RVRI and PVST…RQYL. Polar residues predominate over residues 596–605; it reads EASRQSNNHS. Disordered regions lie at residues 596 to 638, 677 to 696, and 773 to 841; these read EASR…SANT, SDSE…APGS, and RRAN…NKSA. A compositionally biased stretch (basic and acidic residues) spans 606-616; it reads SAEEVNSKTDS. 2 stretches are compositionally biased toward polar residues: residues 783 to 810 and 819 to 831; these read TMST…GSDS and IDSS…SSIG. The SAM domain occupies 869-932; the sequence is FKGSDLPELF…LLAISELNKN (64 aa).

It belongs to the BicC family.

Putative RNA-binding protein. May be involved in regulating gene expression during embryonic development. Seems to be involved in endoderm formation. Ectopic expression results in endoderm formation in the absence of mesoderm induction. This chain is Protein bicaudal C homolog 1-B (bicc1-b), found in Xenopus laevis (African clawed frog).